A 180-amino-acid polypeptide reads, in one-letter code: Stathmin-3 (180 aa).

The SLD domain maps to 38-180; that stretch reads GDMEVKQLDK…NKEQREEISG (143 aa). Residues 60–74 show a composition bias toward low complexity; it reads SPSDLSPESPILSSP. Positions 60–82 are disordered; that stretch reads SPSDLSPESPILSSPPKKKDLSL. The stretch at 75-179 forms a coiled coil; that stretch reads PKKKDLSLEE…RNKEQREEIS (105 aa).

It belongs to the stathmin family.

This Gallus gallus (Chicken) protein is Stathmin-3 (STMN3).